Reading from the N-terminus, the 750-residue chain is Penicillin-binding protein 2x (750 aa).

The chain crosses the membrane as a helical span at residues 29 to 49 (LSLLSVFVFAIFLVNFAVIIG). The active-site Acyl-ester intermediate is S337. PASTA domains follow at residues 632-691 (QQSP…ILSD) and 692-750 (KAEE…TLGD).

This sequence belongs to the transpeptidase family.

Its subcellular location is the cell membrane. Its function is as follows. A transpeptidase that forms peptide cross-links between adjacent glycan strands in cell wall peptidoglycan (PG). Part of the divisome machinery that synthesizes the septal cross wall. Beta-lactams inactivate the PBPs by acylating an essential serine residue in the active site of these proteins. The protein is Penicillin-binding protein 2x (pbpX) of Streptococcus pneumoniae serotype 4 (strain ATCC BAA-334 / TIGR4).